A 1051-amino-acid polypeptide reads, in one-letter code: Lateral signaling target protein 2 homolog (1051 aa).

Disordered stretches follow at residues 305-440, 516-552, 566-703, and 837-968; these read PLGS…DEDL, GSNAATERQQQQQHMDELQPGDQQQQQQQLQDEPSTS, HLPS…NASS, and IDLA…DGKA. The span at 319–358 shows a compositional bias: low complexity; it reads NNTSSSTSNNNNNNNNNSSSSSSSSSGSGSNTAKTSTSST. The segment covering 360-370 has biased composition (basic and acidic residues); that stretch reads KAVERLVDHRN. Residues 371-391 are compositionally biased toward polar residues; it reads NNSSTVAGATQPSTARSPSML. Low complexity-rich tracts occupy residues 392–401 and 409–428; these read SLSAGSTPTA and PSHSIASTSSAATTSTNPPA. A compositionally biased stretch (polar residues) spans 518 to 528; that stretch reads NAATERQQQQQ. Composition is skewed to low complexity over residues 533–549 and 568–582; these read LQPGDQQQQQQQLQDEP and PSSSSENEQAPSSNQ. A phosphoserine mark is found at Ser569 and Ser570. A compositionally biased stretch (polar residues) spans 583 to 596; sequence QTTIKTPNGNQSMP. The span at 597–606 shows a compositional bias: low complexity; it reads NSSSSSSNHN. Basic residues-rich tracts occupy residues 607-637 and 650-672; these read NNRHRHSHSHSHSSHHHHHHHRHHHHTHPHH and HHHHHHHHHQSHPHRINRSARKR. The span at 692–703 shows a compositional bias: polar residues; that stretch reads TPGSADTSNASS. A compositionally biased stretch (low complexity) spans 840–852; the sequence is ASGNNNGNSNAAA. Ser861 carries the post-translational modification Phosphoserine. Low complexity-rich tracts occupy residues 879–924 and 937–960; these read QQQQ…SPIS and SSIGTTSTITPSTAAATATTMSPP. The FYVE-type zinc finger occupies 965-1025; it reads DGKAPRCMSC…VCRECYVREV (61 aa). The Zn(2+) site is built by Cys971, Cys974, Cys987, Cys990, Cys995, Cys998, Cys1017, and Cys1020. The interval 1028–1051 is disordered; sequence SRQAPAQPSQAHGQASRPQAASAS.

This sequence belongs to the lst-2 family.

Functionally, negative regulator of epidermal growth factor receptor (EGFR) signaling. The chain is Lateral signaling target protein 2 homolog from Drosophila mojavensis (Fruit fly).